A 426-amino-acid polypeptide reads, in one-letter code: Serine--tRNA ligase (426 aa).

Position 233–235 (233–235) interacts with L-serine; the sequence is TSE. An ATP-binding site is contributed by 264-266; that stretch reads RAE. Residue glutamate 287 participates in L-serine binding. ATP is bound at residue 351–354; sequence EISS. Serine 387 contacts L-serine.

The protein belongs to the class-II aminoacyl-tRNA synthetase family. Type-1 seryl-tRNA synthetase subfamily. Homodimer. The tRNA molecule binds across the dimer.

The protein localises to the cytoplasm. It carries out the reaction tRNA(Ser) + L-serine + ATP = L-seryl-tRNA(Ser) + AMP + diphosphate + H(+). The enzyme catalyses tRNA(Sec) + L-serine + ATP = L-seryl-tRNA(Sec) + AMP + diphosphate + H(+). It participates in aminoacyl-tRNA biosynthesis; selenocysteinyl-tRNA(Sec) biosynthesis; L-seryl-tRNA(Sec) from L-serine and tRNA(Sec): step 1/1. Functionally, catalyzes the attachment of serine to tRNA(Ser). Is also able to aminoacylate tRNA(Sec) with serine, to form the misacylated tRNA L-seryl-tRNA(Sec), which will be further converted into selenocysteinyl-tRNA(Sec). This is Serine--tRNA ligase from Stenotrophomonas maltophilia (strain R551-3).